Reading from the N-terminus, the 67-residue chain is Large ribosomal subunit protein uL29 (67 aa).

The protein belongs to the universal ribosomal protein uL29 family.

This chain is Large ribosomal subunit protein uL29, found in Heliobacterium modesticaldum (strain ATCC 51547 / Ice1).